The chain runs to 558 residues: MDAIVLWLREVFLEPSVTQTIIILSLVCALGLQLGKLRIGTISLGITFVFFVGILASHFGVTTDPVMLTFAQNFGLVIFVYALGLQVGPSFFPSLKKGGIAQNLISLGLVLLTFLLCILLYYILGISMPNLMGIVAGATTNTPALGAAQTTLHQINPDATAEMAEMALACAVTYPLGVVGVIIALALLKVMMPKVEERDDSEAPKAFFSEYEICNPALDGKSVREVALLLKRPFVITRVWHNGKVEIPTSDMILYFGDHILAVSGEEDTSQLEILFGKREMKDWNRPDIDWNSVDKQLVSRRLVITRPKLNGVRLGMLKIRNLYGVNISRVDRAGVELLPDRDLRLQLGDRLTVVGEGKAVERVAEILGDEVKQLDNPHLTTLFGGLVLGCVFGMIPFYLPGVSMPIKLGLAGGPIIIGILMGAFGPRFHLTTYVTNSANLLLRQFGIILYLGGLGLASGANFFDTIIHGDGLLWVGAGFLITMLPTLLVGWASIKLLRNRYDGTAGMICGSTANPMALDYVNSQLKGDGASVVYATVYPLSMFVRIIFAQIMILIFA.

5 helical membrane-spanning segments follow: residues 15–32, 39–61, 76–95, 104–126, and 166–188; these read PSVT…ALGL, IGTI…HFGV, LVIF…FPSL, LISL…ILGI, and MALA…LALL. RCK C-terminal domains lie at 196–278 and 286–370; these read EERD…LFGK and RPDI…ILGD. Helical transmembrane passes span 383 to 405, 409 to 426, 446 to 468, 473 to 495, and 533 to 555; these read LFGG…GVSM, LGLA…GAFG, FGII…DTII, LLWV…WASI, and VVYA…IMIL.

Belongs to the AAE transporter (TC 2.A.81) family.

It is found in the cell membrane. This is an uncharacterized protein from Porphyromonas gingivalis (strain ATCC BAA-308 / W83).